Reading from the N-terminus, the 470-residue chain is Glutamate--tRNA ligase (470 aa).

The short motif at 9–19 (PSPTGFLHVGG) is the 'HIGH' region element. Positions 236-240 (RLSKR) match the 'KMSKS' region motif. Residue Lys-239 coordinates ATP.

The protein belongs to the class-I aminoacyl-tRNA synthetase family. Glutamate--tRNA ligase type 1 subfamily. In terms of assembly, monomer.

It is found in the cytoplasm. The catalysed reaction is tRNA(Glu) + L-glutamate + ATP = L-glutamyl-tRNA(Glu) + AMP + diphosphate. Functionally, catalyzes the attachment of glutamate to tRNA(Glu) in a two-step reaction: glutamate is first activated by ATP to form Glu-AMP and then transferred to the acceptor end of tRNA(Glu). The protein is Glutamate--tRNA ligase of Legionella pneumophila (strain Corby).